The primary structure comprises 93 residues: Small hydrophobic protein (93 aa).

Helical transmembrane passes span 5–25 (LIII…VLAY) and 32–52 (AFGP…IYFP).

Its subcellular location is the membrane. The chain is Small hydrophobic protein from Tupaia virus (isolate Tupaia/Thailand/-/1986) (TUPV).